The chain runs to 137 residues: Putative mucosal pentraxin homolog (137 aa).

Positions 1–137 (MGMYLLHIGN…YVVTKPKVWA (137 aa)) constitute a Pentraxin (PTX) domain. The Ca(2+) site is built by glutamate 73, aspartate 75, and glutamine 85.

Belongs to the pentraxin family. Not expressed in the intestinal tract including ascending colon, descending colon and rectum. Not expressed in the human colon cancer cell lines HT-29 and CaCo-2.

This chain is Putative mucosal pentraxin homolog (MPTX1), found in Homo sapiens (Human).